Here is a 413-residue protein sequence, read N- to C-terminus: MRAFPRVLPFRHQRSYNNILLRTVRLFGSSLSSFDFSRQMPKVDPDNTAAMLLQKNLIQRNNMLYGYGSGTIRCTLLDSTGRAKSPLVEIKREDLVSKHGLLPRDLRKIEKSRKNDLVPSLLVRENSILISLLTVKALIKPDMVIIFDSAGSGITLNSEAHKDFINDMKLRLKNQETSELNSDPLPYEFRALETIFISALSNLTSEMKVLLTICKGVLQDLEFSITRDKLRFLLGQNKKLSSFNKKAVLVKDMLDDLLEQDDMLCDMYLTDKKAGKIRVQDDHTEIEMLLETYHNYVDEIVQKSESAISDVKTTEEIINIILDSNRNELMLLGIRYAIGMLSLGGALFLGSIYGMNLESFIEESNYAYLTVTILGLISTVWLYAKGIRHLHKLQRMTLLSKIKTDSVHELLKK.

The transit peptide at 1-35 directs the protein to the mitochondrion; it reads MRAFPRVLPFRHQRSYNNILLRTVRLFGSSLSSFD. The N-linked (GlcNAc...) asparagine glycan is linked to asparagine 202. Residues 329–349 traverse the membrane as a helical segment; the sequence is LMLLGIRYAIGMLSLGGALFL. Residues 353-356 carry the YGMN motif; the sequence is YGMN. A helical transmembrane segment spans residues 367–387; sequence AYLTVTILGLISTVWLYAKGI.

Belongs to the CorA metal ion transporter (MIT) (TC 1.A.35) family. As to quaternary structure, forms homooligomers. Interacts with MRS2. In terms of processing, N-glycosylated. Glycosylation is important for correct localization of the protein.

The protein localises to the mitochondrion inner membrane. Its function is as follows. Mitochondrial inner membrane magnesium transporter required for mitochondrial magnesium homeostasis. Modulates the conductance of the MRS2 channel. Involved in the splicing of mRNA group II introns in mitochondria by affecting mitochondrial magnesium concentrations, which are critical for group II intron splicing. The polypeptide is Mitochondrial inner membrane magnesium transporter MFM1 (MFM1) (Saccharomyces cerevisiae (strain ATCC 204508 / S288c) (Baker's yeast)).